The following is a 343-amino-acid chain: UPF0157 protein YqkA (343 aa).

One can recognise an N-acetyltransferase domain in the interval 8–144 (KEATIAREIL…VKAAQGLLLS (137 aa)). The UPF0157 stretch occupies residues 135–343 (VKAAQGLLLS…ENDENGGFTL (209 aa)).

The protein in the C-terminal section; belongs to the UPF0157 (GrpB) family.

The chain is UPF0157 protein YqkA (yqkA) from Bacillus subtilis (strain 168).